The sequence spans 296 residues: Bifunctional protein FolD (296 aa).

NADP(+) is bound by residues 166-168 (GRS), Ser191, and Ile232.

This sequence belongs to the tetrahydrofolate dehydrogenase/cyclohydrolase family. In terms of assembly, homodimer.

The catalysed reaction is (6R)-5,10-methylene-5,6,7,8-tetrahydrofolate + NADP(+) = (6R)-5,10-methenyltetrahydrofolate + NADPH. It carries out the reaction (6R)-5,10-methenyltetrahydrofolate + H2O = (6R)-10-formyltetrahydrofolate + H(+). It functions in the pathway one-carbon metabolism; tetrahydrofolate interconversion. Functionally, catalyzes the oxidation of 5,10-methylenetetrahydrofolate to 5,10-methenyltetrahydrofolate and then the hydrolysis of 5,10-methenyltetrahydrofolate to 10-formyltetrahydrofolate. The protein is Bifunctional protein FolD of Cereibacter sphaeroides (strain ATCC 17023 / DSM 158 / JCM 6121 / CCUG 31486 / LMG 2827 / NBRC 12203 / NCIMB 8253 / ATH 2.4.1.) (Rhodobacter sphaeroides).